A 160-amino-acid polypeptide reads, in one-letter code: Phosphopantetheine adenylyltransferase (160 aa).

A substrate-binding site is contributed by Ser-10. ATP contacts are provided by residues 10 to 11 and His-18; that span reads SF. Substrate contacts are provided by Lys-42, Thr-74, and Arg-88. Residues 89 to 91, Glu-99, and 124 to 130 contribute to the ATP site; these read GLR and YSFISST.

Belongs to the bacterial CoaD family. As to quaternary structure, homohexamer. Mg(2+) serves as cofactor.

It localises to the cytoplasm. It carries out the reaction (R)-4'-phosphopantetheine + ATP + H(+) = 3'-dephospho-CoA + diphosphate. It functions in the pathway cofactor biosynthesis; coenzyme A biosynthesis; CoA from (R)-pantothenate: step 4/5. In terms of biological role, reversibly transfers an adenylyl group from ATP to 4'-phosphopantetheine, yielding dephospho-CoA (dPCoA) and pyrophosphate. The protein is Phosphopantetheine adenylyltransferase of Leptospira borgpetersenii serovar Hardjo-bovis (strain L550).